Reading from the N-terminus, the 549-residue chain is Protein EPD2 (549 aa).

Residues 1–20 (MISVIKSLLTLSVLSTLAAA) form the signal peptide. A glycan (N-linked (GlcNAc...) asparagine) is linked at N41. The cysteines at positions 82 and 111 are disulfide-linked. N-linked (GlcNAc...) asparagine glycans are attached at residues N173 and N261. Disulfide bonds link C224–C358, C242–C273, C381–C432, C390–C456, and C409–C414. Residue N467 is glycosylated (N-linked (GlcNAc...) asparagine). A disordered region spans residues 470 to 518 (ASTSCSAAGGRGLQSGRRSSTTRGGSSSSRSSSSSSSSSTGSGSSNAGI). A compositionally biased stretch (low complexity) spans 484 to 514 (SGRRSSTTRGGSSSSRSSSSSSSSSTGSGSS).

The protein belongs to the glycosyl hydrolase 72 family.

It is found in the cell membrane. The polypeptide is Protein EPD2 (EPD2) (Candida maltosa (Yeast)).